Reading from the N-terminus, the 801-residue chain is Potassium transporter 1 (801 aa).

Residues 1-20 form a disordered region; sequence MSSALEVEGSGSPGVEPAAT. Residues 1–57 are Cytoplasmic-facing; it reads MSSALEVEGSGSPGVEPAATATASRLKRHDSLFGDAEKVSGGKHHGGSAVSWAVTLH. Residues 58–80 traverse the membrane as a helical segment; it reads LAFQSVGIIYGDIGTSPLYVYSS. The Extracellular segment spans residues 81-94; sequence TFPDGIGHRDDLVG. A helical transmembrane segment spans residues 95–115; sequence VLSLILYTLIIIPMLKYVFIV. At 116-181 the chain is on the cytoplasmic side; that stretch reads LYANDNGDGG…HKLESSRAAK (66 aa). The chain crosses the membrane as a helical span at residues 182 to 202; sequence MALFFLTILGTSMVMGDGTLT. The Extracellular segment spans residues 203-219; sequence PAISVLSAVSGIREKAP. Residues 220-240 form a helical membrane-spanning segment; that stretch reads NLTQTQVVLISVAILFMLFSV. The Cytoplasmic segment spans residues 241-247; it reads QRFGTDK. Residues 248–268 form a helical membrane-spanning segment; that stretch reads VGYTFAPIISVWFLLIAGIGL. At 269–298 the chain is on the extracellular side; sequence YNLVVHEITILKAFNPWYIVQYFRRNGKKG. Residues 299 to 319 form a helical membrane-spanning segment; it reads WVSLGGVVLCVTGTEGMFADL. Residues 320–328 lie on the Cytoplasmic side of the membrane; the sequence is GHFNIRAVQ. A helical membrane pass occupies residues 329–349; it reads ISFNCILFPSVALCYIGQAAY. Topologically, residues 350–375 are extracellular; the sequence is LRKFPENVSDTFYKSIPGKYRDRLNF. The chain crosses the membrane as a helical span at residues 376–398; the sequence is GPLFWPTFIVAILAAIIASQAML. The Cytoplasmic portion of the chain corresponds to 399–429; it reads SGAFAILSKALSLGCLPRVRVIHTSKKYEGQ. The helical transmembrane segment at 430–450 threads the bilayer; that stretch reads VYIPEVNFMMGLASIIVTIAF. At 451–461 the chain is on the extracellular side; that stretch reads RTTTSIGNAYG. A helical transmembrane segment spans residues 462 to 482; the sequence is ICVVTTFMVTTHLMTVVMLLI. Over 483–487 the chain is Cytoplasmic; that stretch reads WKKHL. The helical transmembrane segment at 488–508 threads the bilayer; sequence VFILLFYCVFGFTEVVYLSSI. At 509–511 the chain is on the extracellular side; sequence LSK. The helical transmembrane segment at 512–532 threads the bilayer; sequence FVDGGYLPFCFAMVLMTMMAT. At 533–801 the chain is on the cytoplasmic side; it reads WHYVHVRRYW…LLKVGITYEI (269 aa). Residues 679-728 form a disordered region; the sequence is DDDDEAAARPRRSTSSAVHSEEAIQAASSGRTTASSVQLQAGGEPPAAMD. The span at 704 to 717 shows a compositional bias: polar residues; sequence AASSGRTTASSVQL.

Belongs to the HAK/KUP transporter (TC 2.A.72.3) family. Expressed almost exclusively in roots.

It is found in the cell membrane. High-affinity potassium transporter. Also transports rubidium, with the same affinity and cesium, with a lower affinity. The polypeptide is Potassium transporter 1 (HAK1) (Oryza sativa subsp. japonica (Rice)).